The primary structure comprises 375 residues: E3 ubiquitin-protein ligase RHF2A (375 aa).

An RING-type; atypical zinc finger spans residues 33–74 (CSICLESFCESDPSTLTSCKHEYHLQCILEWCQRSSQCPMCW). Positions 146-159 (RARHGVRREGHRSR) are enriched in basic residues. Disordered stretches follow at residues 146–165 (RARH…SQGH), 172–262 (SSQP…SESL), and 318–375 (ERLE…SGSS). Residues 178–188 (SSPPPHPPMPS) are compositionally biased toward pro residues. Polar residues-rich tracts occupy residues 211 to 245 (SHQS…SSPS) and 327 to 336 (RPSTASVSDV). The span at 337–365 (SENHTPETNNEHNRAAAGDEHSVNERGVK) shows a compositional bias: basic and acidic residues.

It catalyses the reaction S-ubiquitinyl-[E2 ubiquitin-conjugating enzyme]-L-cysteine + [acceptor protein]-L-lysine = [E2 ubiquitin-conjugating enzyme]-L-cysteine + N(6)-ubiquitinyl-[acceptor protein]-L-lysine.. Its pathway is protein modification; protein ubiquitination. E3 ubiquitin-protein ligase involved in the positive regulation of the gametogenesis progression. Required for the degradation of KRP6, a cyclin-dependent kinase inhibitor which accumulates during meiosis and blocks the progression of subsequent mitoses during gametophytes development. Functions in association with RHF1A. The chain is E3 ubiquitin-protein ligase RHF2A from Arabidopsis thaliana (Mouse-ear cress).